We begin with the raw amino-acid sequence, 403 residues long: Na(+)-translocating NADH-quinone reductase subunit B (403 aa).

The next 9 helical transmembrane spans lie at 56 to 76 (MMII…YNVG), 121 to 141 (AYFL…EVLF), 164 to 184 (LPPS…VVLG), 225 to 245 (GFAG…NILG), 260 to 280 (GSMG…LLLT), 287 to 307 (IVAG…AIGS), 312 to 332 (MFAM…GMIF), 348 to 368 (WLFG…NPAF), and 371 to 391 (GMML…HFVV). The residue at position 230 (threonine 230) is an FMN phosphoryl threonine.

It belongs to the NqrB/RnfD family. In terms of assembly, composed of six subunits; NqrA, NqrB, NqrC, NqrD, NqrE and NqrF. The cofactor is FMN.

The protein localises to the cell inner membrane. The catalysed reaction is a ubiquinone + n Na(+)(in) + NADH + H(+) = a ubiquinol + n Na(+)(out) + NAD(+). NQR complex catalyzes the reduction of ubiquinone-1 to ubiquinol by two successive reactions, coupled with the transport of Na(+) ions from the cytoplasm to the periplasm. NqrA to NqrE are probably involved in the second step, the conversion of ubisemiquinone to ubiquinol. The polypeptide is Na(+)-translocating NADH-quinone reductase subunit B (Pseudomonas paraeruginosa (strain DSM 24068 / PA7) (Pseudomonas aeruginosa (strain PA7))).